Consider the following 354-residue polypeptide: DNA integrity scanning protein DisA (354 aa).

One can recognise a DAC domain in the interval 6-144; it reads GMKIKDTLKI…GDIKYVLRDS (139 aa). ATP contacts are provided by residues Gly-73, Leu-91, and 104-108; that span reads TRHRT.

The protein belongs to the DisA family. In terms of assembly, homooctamer. It depends on Mg(2+) as a cofactor.

It carries out the reaction 2 ATP = 3',3'-c-di-AMP + 2 diphosphate. Its function is as follows. Participates in a DNA-damage check-point that is active prior to asymmetric division when DNA is damaged. DisA forms globular foci that rapidly scan along the chromosomes during sporulation, searching for lesions. When a lesion is present, DisA pauses at the lesion site. This triggers a cellular response that culminates in a temporary block in sporulation initiation. Also has diadenylate cyclase activity, catalyzing the condensation of 2 ATP molecules into cyclic di-AMP (c-di-AMP). c-di-AMP acts as a signaling molecule that couples DNA integrity with progression of sporulation. The rise in c-di-AMP level generated by DisA while scanning the chromosome, operates as a positive signal that advances sporulation; upon encountering a lesion, the DisA focus arrests at the damaged site and halts c-di-AMP synthesis. This is DNA integrity scanning protein DisA from Clostridium botulinum (strain Alaska E43 / Type E3).